We begin with the raw amino-acid sequence, 66 residues long: Metallothionein-like protein type 3 (66 aa).

It belongs to the metallothionein superfamily. Type 15 family.

Its function is as follows. Metallothioneins have a high content of cysteine residues that bind various heavy metals. The sequence is that of Metallothionein-like protein type 3 (MT2) from Malus domestica (Apple).